A 69-amino-acid polypeptide reads, in one-letter code: Cold shock protein CapB (69 aa).

Positions G7–V66 constitute a CSD domain.

It is found in the cytoplasm. Affects cell viability at low temperatures. In Pseudomonas fragi, this protein is Cold shock protein CapB (capB).